A 489-amino-acid chain; its full sequence is MRRRITFVQRPESPFHVDQAVLTSDALSITHLDAAREERATFGFDELPAEIWQVLKSSHELHIRWATERPYEIGAPFSSRISPGLHVYYTPGTARETGVGLCSLLKTVFDESLECQSLRYYSRLPSLQNLVAFIQHKFCDRSDEKCVHHAESILSADSVDVNYDSISHALTVSGYWSTSPGQGWTEQIRKHAADTHQVEVGLLGVESATEPEELKMEPTLFSFPSRHHPLPADATYTVSFPAPTGLHPTLTISMPRASLRRPPAPPDATCALHTYLTLPSWIFGDKYQLSTTDRLFLSSHNLAALRAVAGETDLEAPDWVVSRWGSNWLLELATPLRPDTSPEEWNASIPLHLRYLTPSESGYRSAAVPWPIVFWACTAEDGTKMGVNPFDRVNLGWEGLFGARTMFYQLHPAPAEGKDRLVEELDVPVLRLREDAGFFQSKTIELGTVVVVGLGLLWVLWKLGLVLWIAGTGRSTRAQKRTDKHRKAE.

Residues 1–448 lie on the Lumenal side of the membrane; it reads MRRRITFVQR…FQSKTIELGT (448 aa). Asparagine 346 carries an N-linked (GlcNAc...) asparagine glycan. Residues 449–469 form a helical membrane-spanning segment; sequence VVVVGLGLLWVLWKLGLVLWI. The Cytoplasmic segment spans residues 470 to 489; the sequence is AGTGRSTRAQKRTDKHRKAE.

This sequence belongs to the PIGX family.

It localises to the endoplasmic reticulum membrane. It participates in glycolipid biosynthesis; glycosylphosphatidylinositol-anchor biosynthesis. Functionally, required for proper folding and/or the stability of a subset of proteins in the endoplasmic reticulum. Component of glycosylphosphatidylinositol-mannosyltransferase 1 which transfers the first of the 4 mannoses in the GPI-anchor precursors during GPI-anchor biosynthesis. Probably acts by stabilizing the mannosyltransferase gpi14. This Aspergillus fumigatus (strain ATCC MYA-4609 / CBS 101355 / FGSC A1100 / Af293) (Neosartorya fumigata) protein is Protein pbn1 (pbn1).